Reading from the N-terminus, the 475-residue chain is Ribulose bisphosphate carboxylase large chain (475 aa).

Positions 1–2 (MS) are excised as a propeptide. Pro-3 carries the N-acetylproline modification. An N6,N6,N6-trimethyllysine modification is found at Lys-14. Substrate is bound by residues Asn-123 and Thr-173. Catalysis depends on Lys-175, which acts as the Proton acceptor. Residue Lys-177 coordinates substrate. Positions 201, 203, and 204 each coordinate Mg(2+). Lys-201 bears the N6-carboxylysine mark. The active-site Proton acceptor is His-294. Arg-295, His-327, and Ser-379 together coordinate substrate.

Belongs to the RuBisCO large chain family. Type I subfamily. In terms of assembly, heterohexadecamer of 8 large chains and 8 small chains; disulfide-linked. The disulfide link is formed within the large subunit homodimers. Mg(2+) serves as cofactor. The disulfide bond which can form in the large chain dimeric partners within the hexadecamer appears to be associated with oxidative stress and protein turnover.

The protein resides in the plastid. It is found in the chloroplast. The catalysed reaction is 2 (2R)-3-phosphoglycerate + 2 H(+) = D-ribulose 1,5-bisphosphate + CO2 + H2O. The enzyme catalyses D-ribulose 1,5-bisphosphate + O2 = 2-phosphoglycolate + (2R)-3-phosphoglycerate + 2 H(+). In terms of biological role, ruBisCO catalyzes two reactions: the carboxylation of D-ribulose 1,5-bisphosphate, the primary event in carbon dioxide fixation, as well as the oxidative fragmentation of the pentose substrate in the photorespiration process. Both reactions occur simultaneously and in competition at the same active site. The sequence is that of Ribulose bisphosphate carboxylase large chain from Pseudolarix amabilis (Golden larch).